A 217-amino-acid chain; its full sequence is Protein MODIFYING WALL LIGNIN-2 (217 aa).

The N-terminal stretch at 1–23 (MHNLFLYSVVFSLGLVSFITCFA) is a signal peptide. Residues 24 to 51 (AEFKRTQKEDIRWDTERNCYVPGSHAFG) are Cytoplasmic-facing. Residues 52–72 (LGSAAVLCFCLAQIVGNIVVF) form a helical membrane-spanning segment. Residues 73–94 (RNHRTRTKREDGYKITDLTLPT) lie on the Extracellular side of the membrane. The helical transmembrane segment at 95-115 (VLLLLSWSNFVVVVLILSTAI) threads the bilayer. Residues 116-137 (SMSRAQAYGEGWLDEDCYLVKD) lie on the Cytoplasmic side of the membrane. Residues 138 to 158 (GVFAASGCLAILGLGALTISA) form a helical membrane-spanning segment. The Extracellular portion of the chain corresponds to 159-217 (TRIKVKKQQQLVQVVIKDQNQDQRRSMEEEQKHDEHQTNKSESVIHLVEEVSSTNISRI). Residues asparagine 197 and asparagine 213 are each glycosylated (N-linked (GlcNAc...) asparagine).

Belongs to the DESIGUAL family.

It localises to the cell membrane. In terms of biological role, together with MWL1, contributes to secondary cell wall biology, specifically lignin biosynthesis. The protein is Protein MODIFYING WALL LIGNIN-2 of Arabidopsis thaliana (Mouse-ear cress).